We begin with the raw amino-acid sequence, 127 residues long: Glycine cleavage system H protein 1 (127 aa).

The Lipoyl-binding domain occupies 20-101 (SVTVGITAYA…MGEGWFFRFI (82 aa)). The residue at position 60 (Lys-60) is an N6-lipoyllysine.

It belongs to the GcvH family. The glycine cleavage system is composed of four proteins: P, T, L and H. It depends on (R)-lipoate as a cofactor.

The glycine cleavage system catalyzes the degradation of glycine. The H protein shuttles the methylamine group of glycine from the P protein to the T protein. In Pseudomonas putida (strain ATCC 47054 / DSM 6125 / CFBP 8728 / NCIMB 11950 / KT2440), this protein is Glycine cleavage system H protein 1.